The following is a 376-amino-acid chain: Cytochrome b (376 aa).

A run of 4 helical transmembrane segments spans residues 28–48, 72–94, 107–127, and 169–189; these read YGFLLGIIFFIQILTGVFLAS, WCFRYMHATGASLVFFLTYLHIL, SWISGLIIFALFIVTAFIGYV, and FFVLHFILPFVALCIVFIHIF. Heme b is bound by residues histidine 78 and histidine 92. Heme b is bound by residues histidine 173 and histidine 187. Histidine 192 contacts a ubiquinone. The next 4 helical transmembrane spans lie at 214–234, 274–294, 317–337, and 340–360; these read LLSLDVKGFNNILILFLIQSI, IPSKNAGLVIVIASLQLLFLL, VPIIWFMCSFYALLWIGCPLP, and IFILYGRLFIILFFSSGLFSL.

It belongs to the cytochrome b family. As to quaternary structure, the main subunits of complex b-c1 are: cytochrome b, cytochrome c1 and the Rieske protein. Requires heme b as cofactor.

It is found in the mitochondrion inner membrane. Functionally, component of the ubiquinol-cytochrome c reductase complex (complex III or cytochrome b-c1 complex) that is part of the mitochondrial respiratory chain. The b-c1 complex mediates electron transfer from ubiquinol to cytochrome c. Contributes to the generation of a proton gradient across the mitochondrial membrane that is then used for ATP synthesis. The protein is Cytochrome b (MT-CYB) of Plasmodium berghei.